Reading from the N-terminus, the 275-residue chain is Putative rhamnulose-1-phosphate aldolase (275 aa).

Glu117 is an active-site residue. Zn(2+) is bound by residues His141, His143, and His212.

This sequence belongs to the aldolase class II family. RhaD subfamily. Homotetramer. The cofactor is Zn(2+).

It localises to the cytoplasm. It carries out the reaction L-rhamnulose 1-phosphate = (S)-lactaldehyde + dihydroxyacetone phosphate. The protein operates within carbohydrate degradation; L-rhamnose degradation; glycerone phosphate from L-rhamnose: step 3/3. Its function is as follows. Catalyzes the reversible cleavage of L-rhamnulose-1-phosphate to dihydroxyacetone phosphate (DHAP) and L-lactaldehyde. In Salmonella typhi, this protein is Putative rhamnulose-1-phosphate aldolase.